A 316-amino-acid chain; its full sequence is Serpentine receptor class delta-45 (316 aa).

7 helical membrane passes run V8–I28, I42–I62, Y91–L111, V128–L148, I184–L204, L234–A254, and F266–V286.

This sequence belongs to the nematode receptor-like protein srd family.

The protein localises to the membrane. The protein is Serpentine receptor class delta-45 (srd-45) of Caenorhabditis elegans.